A 298-amino-acid polypeptide reads, in one-letter code: Probable 2-(5''-triphosphoribosyl)-3'-dephosphocoenzyme-A synthase 2 (298 aa).

Belongs to the CitG/MdcB family.

It carries out the reaction 3'-dephospho-CoA + ATP = 2'-(5''-triphospho-alpha-D-ribosyl)-3'-dephospho-CoA + adenine. This is Probable 2-(5''-triphosphoribosyl)-3'-dephosphocoenzyme-A synthase 2 from Salmonella paratyphi A (strain ATCC 9150 / SARB42).